Reading from the N-terminus, the 361-residue chain is Peptide chain release factor 1 (361 aa).

At Gln-235 the chain carries N5-methylglutamine.

The protein belongs to the prokaryotic/mitochondrial release factor family. In terms of processing, methylated by PrmC. Methylation increases the termination efficiency of RF1.

Its subcellular location is the cytoplasm. Its function is as follows. Peptide chain release factor 1 directs the termination of translation in response to the peptide chain termination codons UAG and UAA. The polypeptide is Peptide chain release factor 1 (Rhodopseudomonas palustris (strain BisB18)).